A 323-amino-acid chain; its full sequence is Calcium homeostasis modulator protein 2 (323 aa).

The Cytoplasmic segment spans residues methionine 1 to valine 21. The central pore stretch occupies residues leucine 14–phenylalanine 39. Residues methionine 22–alanine 43 traverse the membrane as a helical segment. Over phenylalanine 44–arginine 52 the chain is Extracellular. Cystine bridges form between cysteine 46-cysteine 130 and cysteine 48-cysteine 162. A helical transmembrane segment spans residues asparagine 53–asparagine 76. The Cytoplasmic segment spans residues asparagine 77–leucine 101. Residues leucine 102–leucine 132 form a helical membrane-spanning segment. The Extracellular portion of the chain corresponds to serine 133–arginine 179. The interval aspartate 145–histidine 152 is hemichannel docking. Residues leucine 180–lysine 206 traverse the membrane as a helical segment. At histidine 207–valine 323 the chain is on the cytoplasmic side. Positions tyrosine 214–phenylalanine 251 are intersubunit interaction.

Belongs to the CALHM family. In terms of assembly, homo-undecamer. Two undecameric hemichannels can assemble in a head-to-head manner to form a gap junction.

It is found in the cell membrane. The catalysed reaction is ATP(in) = ATP(out). In terms of biological role, pore-forming subunit of Ca(2+) homeostasis modulator channels. Mediates ATP release from astrocytes and ATP-induced Ca(2+) influx in microglia thus regulating neuronal ATP and Ca(2+) homeostasis, synaptic transmission and neuroinflammatory response. May form intercellular gap junctions. The gating mechanism remains unknown. The protein is Calcium homeostasis modulator protein 2 (Calhm2) of Rattus norvegicus (Rat).